Reading from the N-terminus, the 160-residue chain is SsrA-binding protein (160 aa).

The segment covering 138 to 148 (KRDDIKDREWQ) has biased composition (basic and acidic residues). The segment at 138-160 (KRDDIKDREWQTAKSRIMKHANR) is disordered.

The protein belongs to the SmpB family.

The protein resides in the cytoplasm. Its function is as follows. Required for rescue of stalled ribosomes mediated by trans-translation. Binds to transfer-messenger RNA (tmRNA), required for stable association of tmRNA with ribosomes. tmRNA and SmpB together mimic tRNA shape, replacing the anticodon stem-loop with SmpB. tmRNA is encoded by the ssrA gene; the 2 termini fold to resemble tRNA(Ala) and it encodes a 'tag peptide', a short internal open reading frame. During trans-translation Ala-aminoacylated tmRNA acts like a tRNA, entering the A-site of stalled ribosomes, displacing the stalled mRNA. The ribosome then switches to translate the ORF on the tmRNA; the nascent peptide is terminated with the 'tag peptide' encoded by the tmRNA and targeted for degradation. The ribosome is freed to recommence translation, which seems to be the essential function of trans-translation. This Serratia proteamaculans (strain 568) protein is SsrA-binding protein.